Reading from the N-terminus, the 881-residue chain is Alanine--tRNA ligase (881 aa).

Histidine 565, histidine 569, cysteine 672, and histidine 676 together coordinate Zn(2+).

It belongs to the class-II aminoacyl-tRNA synthetase family. Zn(2+) serves as cofactor.

Its subcellular location is the cytoplasm. It carries out the reaction tRNA(Ala) + L-alanine + ATP = L-alanyl-tRNA(Ala) + AMP + diphosphate. Catalyzes the attachment of alanine to tRNA(Ala) in a two-step reaction: alanine is first activated by ATP to form Ala-AMP and then transferred to the acceptor end of tRNA(Ala). Also edits incorrectly charged Ser-tRNA(Ala) and Gly-tRNA(Ala) via its editing domain. The chain is Alanine--tRNA ligase from Novosphingobium aromaticivorans (strain ATCC 700278 / DSM 12444 / CCUG 56034 / CIP 105152 / NBRC 16084 / F199).